We begin with the raw amino-acid sequence, 428 residues long: GTPase Obg (428 aa).

Residues 1-158 (MFVDQVKIYV…RDVILELKVL (158 aa)) enclose the Obg domain. Residues 159–329 (ADVGLVGFPS…LLFEVANLIE (171 aa)) form the OBG-type G domain. GTP is bound by residues 165-172 (GFPSVGKS), 190-194 (FTTIV), 212-215 (DLPG), 282-285 (NKMD), and 310-312 (SAV). Mg(2+)-binding residues include S172 and T192. In terms of domain architecture, OCT spans 350–428 (KFETEGVKFD…ILEYEFEFID (79 aa)).

The protein belongs to the TRAFAC class OBG-HflX-like GTPase superfamily. OBG GTPase family. In terms of assembly, monomer. The cofactor is Mg(2+).

The protein localises to the cytoplasm. In terms of biological role, an essential GTPase which binds GTP, GDP and possibly (p)ppGpp with moderate affinity, with high nucleotide exchange rates and a fairly low GTP hydrolysis rate. Plays a role in control of the cell cycle, stress response, ribosome biogenesis and in those bacteria that undergo differentiation, in morphogenesis control. The sequence is that of GTPase Obg from Bacillus cereus (strain AH820).